The primary structure comprises 225 residues: Ribonuclease T (225 aa).

Residues 1 to 21 (MSEDHFDDEHEGHGGGGGSRH) are disordered. Residues 33 to 207 (VVVDVETGGF…YDTEKTAELF (175 aa)) enclose the Exonuclease domain. Residues Asp-36, Glu-38, His-194, and Asp-199 each coordinate Mg(2+). His-194 serves as the catalytic Proton donor/acceptor.

This sequence belongs to the RNase T family. Homodimer. The cofactor is Mg(2+).

Its function is as follows. Trims short 3' overhangs of a variety of RNA species, leaving a one or two nucleotide 3' overhang. Responsible for the end-turnover of tRNA: specifically removes the terminal AMP residue from uncharged tRNA (tRNA-C-C-A). Also appears to be involved in tRNA biosynthesis. This Pseudomonas savastanoi pv. phaseolicola (strain 1448A / Race 6) (Pseudomonas syringae pv. phaseolicola (strain 1448A / Race 6)) protein is Ribonuclease T.